The primary structure comprises 193 residues: Ferredoxin-2, mitochondrial (193 aa).

The interval 38–70 (QATPEKLETSNEEEGSSSAQITAGVESDAENQR) is disordered. The 103-residue stretch at 78–180 (VEVVFLDRSG…GAEFTLPKIT (103 aa)) folds into the 2Fe-2S ferredoxin-type domain. The [2Fe-2S] cluster site is built by C115, C121, C124, and C161.

This sequence belongs to the adrenodoxin/putidaredoxin family. In terms of assembly, component of the mitochondrial core iron-sulfur cluster (ISC) complex composed of NFS1, LYRM4, NDUFAB1, ISCU, FXN, and FDX2; this complex is a heterohexamer containing two copies of each monomer. [2Fe-2S] cluster serves as cofactor.

The protein localises to the mitochondrion. The protein resides in the mitochondrion matrix. Its function is as follows. Electron donor, of the core iron-sulfur cluster (ISC) assembly complex, that acts to reduce the persulfide into sulfide during [2Fe-2S] clusters assembly on the scaffolding protein ISCU. The core iron-sulfur cluster (ISC) assembly complex is involved in the de novo synthesis of a [2Fe-2S] cluster, the first step of the mitochondrial iron-sulfur protein biogenesis. This process is initiated by the cysteine desulfurase complex (NFS1:LYRM4:NDUFAB1) that produces persulfide which is delivered on the scaffold protein ISCU in a FXN-dependent manner. Then this complex is stabilized by FDX2 which provides reducing equivalents to accomplish the [2Fe-2S] cluster assembly. Finally, the [2Fe-2S] cluster is transferred from ISCU to chaperone proteins, including HSCB, HSPA9 and GLRX5. Essential for coenzyme Q biosynthesis: together with FDXR, transfers the electrons required for the hydroxylation reaction performed by COQ6. This Xenopus laevis (African clawed frog) protein is Ferredoxin-2, mitochondrial.